We begin with the raw amino-acid sequence, 547 residues long: MAAKEVKFAGEAREKMLRGVDILANAVKVTLGPKGRNVVIEKSFGAPRITKDGVSVAKEIELEDKFENLGAQLVREVASKTNDLAGDGTTTATVLAQAIVKEGAKAVAAGMNPMDLKRGIDLATAAAVKDIQARAKKVSSSAEVAQVGTISANGDSSIGEMIAGAMQKVGNEGVITVEEAKTAETELEVVEGMQFDRGYLSPYFITNAEKMIADLEDPFLLIFEKKLSGLQPILPVLEAVVQSGKPLVIVAEDVEGEALATLVVNKLRGGLKVAAVKAPGFGDRRKAMLEDIAILTGGQVISEDLGIKLENVTLAQLGRAKKVILEKEKTTIVDGVGEKAEIEARVAQIKAQIEETSSDYDREKLQERLAKLAGGVAVIRVGGSTEVEVKEKKDRVDDALNATRAAVEEGIVPGGGVALLRAKKAVEALSSENPDIAAGIKIVLRALEAPIRQIAENSGVEGSIVVGKVLESEGNFGFNAQTEQYVDLVAEGVVDPAKVVRTALQDASSVASLLVTTEALIAELPKKDAGMPAMPGGGMGGMGGMDF.

ATP-binding positions include 30 to 33, lysine 51, 87 to 91, glycine 415, and aspartate 495; these read TLGP and DGTTT.

Belongs to the chaperonin (HSP60) family. In terms of assembly, forms a cylinder of 14 subunits composed of two heptameric rings stacked back-to-back. Interacts with the co-chaperonin GroES.

The protein resides in the cytoplasm. It carries out the reaction ATP + H2O + a folded polypeptide = ADP + phosphate + an unfolded polypeptide.. In terms of biological role, together with its co-chaperonin GroES, plays an essential role in assisting protein folding. The GroEL-GroES system forms a nano-cage that allows encapsulation of the non-native substrate proteins and provides a physical environment optimized to promote and accelerate protein folding. This chain is Chaperonin GroEL 1, found in Azorhizobium caulinodans (strain ATCC 43989 / DSM 5975 / JCM 20966 / LMG 6465 / NBRC 14845 / NCIMB 13405 / ORS 571).